Reading from the N-terminus, the 548-residue chain is Probable malate:quinone oxidoreductase (548 aa).

The interval 521–548 (DKPQAADSTPKPQLKPQPVQKEVADIAL) is disordered. Low complexity predominate over residues 530–541 (PKPQLKPQPVQK).

It belongs to the MQO family. The cofactor is FAD.

The enzyme catalyses (S)-malate + a quinone = a quinol + oxaloacetate. It participates in carbohydrate metabolism; tricarboxylic acid cycle; oxaloacetate from (S)-malate (quinone route): step 1/1. The protein is Probable malate:quinone oxidoreductase of Escherichia coli O139:H28 (strain E24377A / ETEC).